Reading from the N-terminus, the 558-residue chain is Proline--tRNA ligase (558 aa).

Belongs to the class-II aminoacyl-tRNA synthetase family. ProS type 1 subfamily. In terms of assembly, homodimer.

It is found in the cytoplasm. It catalyses the reaction tRNA(Pro) + L-proline + ATP = L-prolyl-tRNA(Pro) + AMP + diphosphate. Functionally, catalyzes the attachment of proline to tRNA(Pro) in a two-step reaction: proline is first activated by ATP to form Pro-AMP and then transferred to the acceptor end of tRNA(Pro). As ProRS can inadvertently accommodate and process non-cognate amino acids such as alanine and cysteine, to avoid such errors it has two additional distinct editing activities against alanine. One activity is designated as 'pretransfer' editing and involves the tRNA(Pro)-independent hydrolysis of activated Ala-AMP. The other activity is designated 'posttransfer' editing and involves deacylation of mischarged Ala-tRNA(Pro). The misacylated Cys-tRNA(Pro) is not edited by ProRS. This Coprothermobacter proteolyticus (strain ATCC 35245 / DSM 5265 / OCM 4 / BT) protein is Proline--tRNA ligase.